Here is a 462-residue protein sequence, read N- to C-terminus: Argininosuccinate lyase (462 aa).

The protein belongs to the lyase 1 family. Argininosuccinate lyase subfamily.

The protein localises to the cytoplasm. The enzyme catalyses 2-(N(omega)-L-arginino)succinate = fumarate + L-arginine. It participates in amino-acid biosynthesis; L-arginine biosynthesis; L-arginine from L-ornithine and carbamoyl phosphate: step 3/3. In Bacillus cereus (strain ATCC 14579 / DSM 31 / CCUG 7414 / JCM 2152 / NBRC 15305 / NCIMB 9373 / NCTC 2599 / NRRL B-3711), this protein is Argininosuccinate lyase.